We begin with the raw amino-acid sequence, 495 residues long: Trigger factor (495 aa).

One can recognise a PPIase FKBP-type domain in the interval 169–254 (GDRVAMDYVG…VKDVAAPGAV (86 aa)). Positions 441–495 (LAEDEGEAKAETKKAAPKKKAAAKTEAAEAGEGEEAAAPKKKAAPKKKAADESAE) are disordered.

It belongs to the FKBP-type PPIase family. Tig subfamily.

It is found in the cytoplasm. It catalyses the reaction [protein]-peptidylproline (omega=180) = [protein]-peptidylproline (omega=0). Its function is as follows. Involved in protein export. Acts as a chaperone by maintaining the newly synthesized protein in an open conformation. Functions as a peptidyl-prolyl cis-trans isomerase. This is Trigger factor from Rhizobium etli (strain CIAT 652).